The primary structure comprises 81 residues: Omega-conotoxin-like Vc6.4 (81 aa).

Residues 1-22 (MKLTCVMIVAVLFLTANTFVTA) form the signal peptide. A propeptide spanning residues 23 to 51 (VPHSSNVLENLYLKARHEMENPEASKLNT) is cleaved from the precursor. 3 disulfides stabilise this stretch: C55–C72, C62–C76, and C71–C80.

This sequence belongs to the conotoxin O1 superfamily. In terms of tissue distribution, expressed by the venom duct.

The protein localises to the secreted. Omega-conotoxins act at presynaptic membranes, they bind and block voltage-gated calcium channels. Act on high voltage-activated (HVA) calcium currents in molluscan neurons. This Conus victoriae (Queen Victoria cone) protein is Omega-conotoxin-like Vc6.4.